A 195-amino-acid chain; its full sequence is MPKLGMQSIRRRQLIDATLEAINEVGMHDATIAQIARRAGVSTGIISHYFRDKNGLLEATMRDITSQLRDAVLNRLHALPQGSAEQRLQAIVGGNFDETQVSSAAMKAWLAFWASSMHQPMLYRLQQVSSRRLLSNLVSEFRRELPREQAQEAGYGLAALIDGLWLRAALSGKPLDKTRANSLTRHFITQHLPTD.

Positions Ser-8–Leu-68 constitute an HTH tetR-type domain. The segment at residues Thr-31–Phe-50 is a DNA-binding region (H-T-H motif).

Its pathway is amine and polyamine biosynthesis; betaine biosynthesis via choline pathway [regulation]. Repressor involved in the biosynthesis of the osmoprotectant glycine betaine. It represses transcription of the choline transporter BetT and the genes of BetAB involved in the synthesis of glycine betaine. This chain is HTH-type transcriptional regulator BetI, found in Escherichia coli (strain K12 / DH10B).